Here is a 351-residue protein sequence, read N- to C-terminus: Biotin synthase (351 aa).

Residues 42 to 269 enclose the Radical SAM core domain; sequence NEVQVSTLLS…KSHVRLSAGR (228 aa). [4Fe-4S] cluster contacts are provided by Cys57, Cys61, and Cys64. Cys101, Cys132, Cys192, and Arg264 together coordinate [2Fe-2S] cluster.

The protein belongs to the radical SAM superfamily. Biotin synthase family. Homodimer. [4Fe-4S] cluster serves as cofactor. [2Fe-2S] cluster is required as a cofactor.

The enzyme catalyses (4R,5S)-dethiobiotin + (sulfur carrier)-SH + 2 reduced [2Fe-2S]-[ferredoxin] + 2 S-adenosyl-L-methionine = (sulfur carrier)-H + biotin + 2 5'-deoxyadenosine + 2 L-methionine + 2 oxidized [2Fe-2S]-[ferredoxin]. The protein operates within cofactor biosynthesis; biotin biosynthesis; biotin from 7,8-diaminononanoate: step 2/2. Functionally, catalyzes the conversion of dethiobiotin (DTB) to biotin by the insertion of a sulfur atom into dethiobiotin via a radical-based mechanism. The sequence is that of Biotin synthase from Psychromonas ingrahamii (strain DSM 17664 / CCUG 51855 / 37).